Consider the following 552-residue polypeptide: Indole-3-pyruvate decarboxylase (552 aa).

E52 is a binding site for thiamine diphosphate. A thiamine pyrophosphate binding region spans residues 385 to 466; the sequence is TSAFGAIDLR…ILVLNNEGYT (82 aa). 2 residues coordinate Mg(2+): D435 and N462.

The protein belongs to the TPP enzyme family. In terms of assembly, homotetramer. The cofactor is a metal cation. Thiamine diphosphate is required as a cofactor.

The enzyme catalyses indole-3-pyruvate + H(+) = indole-3-acetaldehyde + CO2. It participates in plant hormone metabolism; auxin biosynthesis. The sequence is that of Indole-3-pyruvate decarboxylase (ipdC) from Enterobacter cloacae.